A 353-amino-acid polypeptide reads, in one-letter code: (3aS,4S,5R,7aS)-5-hydroxy-7a-methyl-1-oxo-octahydro-1H-indene-4-carboxyl-CoA dehydrogenase (353 aa).

Residues 22–24 (GMG), 171–173 (AGG), and 194–195 (GT) each bind FMN.

It belongs to the nitronate monooxygenase family.

The enzyme catalyses (3aS,4S,5R,7aS)-5-hydroxy-7a-methyl-1-oxo-octahydro-1H-indene-4-carboxyl-CoA + NAD(+) = (5R,7aS)-5-hydroxy-7a-methyl-1-oxo-2,3,5,6,7,7a-hexahydro-1H-indene-carboxyl-CoA + NADH + H(+). It functions in the pathway steroid metabolism; cholesterol degradation. Its function is as follows. Involved in the final steps of cholesterol and steroid degradation. Probably catalyzes the introduction of a double bound into the C ring of 5OH-HIC-CoA, leading to the formation of (5R,7aS)-5-hydroxy-7a-methyl-1-oxo-3,5,6,7-tetrahydro-2H-indene-4-carboxyl-CoA. This chain is (3aS,4S,5R,7aS)-5-hydroxy-7a-methyl-1-oxo-octahydro-1H-indene-4-carboxyl-CoA dehydrogenase, found in Rhodococcus jostii (strain RHA1).